Consider the following 201-residue polypeptide: ATP-dependent Clp protease proteolytic subunit 2 (201 aa).

Serine 100 acts as the Nucleophile in catalysis. Histidine 125 is an active-site residue.

It belongs to the peptidase S14 family. As to quaternary structure, fourteen ClpP subunits assemble into 2 heptameric rings which stack back to back to give a disk-like structure with a central cavity, resembling the structure of eukaryotic proteasomes.

Its subcellular location is the cytoplasm. The catalysed reaction is Hydrolysis of proteins to small peptides in the presence of ATP and magnesium. alpha-casein is the usual test substrate. In the absence of ATP, only oligopeptides shorter than five residues are hydrolyzed (such as succinyl-Leu-Tyr-|-NHMec, and Leu-Tyr-Leu-|-Tyr-Trp, in which cleavage of the -Tyr-|-Leu- and -Tyr-|-Trp bonds also occurs).. In terms of biological role, cleaves peptides in various proteins in a process that requires ATP hydrolysis. Has a chymotrypsin-like activity. Plays a major role in the degradation of misfolded proteins. The sequence is that of ATP-dependent Clp protease proteolytic subunit 2 from Corynebacterium glutamicum (strain ATCC 13032 / DSM 20300 / JCM 1318 / BCRC 11384 / CCUG 27702 / LMG 3730 / NBRC 12168 / NCIMB 10025 / NRRL B-2784 / 534).